The following is a 169-amino-acid chain: Ribosome maturation factor RimM (169 aa).

The PRC barrel domain occupies 97-169 (EDEVYFKDLI…KIVVDWEYDY (73 aa)).

Belongs to the RimM family. As to quaternary structure, binds ribosomal protein uS19.

The protein resides in the cytoplasm. An accessory protein needed during the final step in the assembly of 30S ribosomal subunit, possibly for assembly of the head region. Essential for efficient processing of 16S rRNA. May be needed both before and after RbfA during the maturation of 16S rRNA. It has affinity for free ribosomal 30S subunits but not for 70S ribosomes. The sequence is that of Ribosome maturation factor RimM from Francisella tularensis subsp. holarctica (strain FTNF002-00 / FTA).